We begin with the raw amino-acid sequence, 497 residues long: Serine hydroxymethyltransferase (497 aa).

Residues L176 and 180 to 182 each bind (6S)-5,6,7,8-tetrahydrofolate; that span reads GHL. K289 is modified (N6-(pyridoxal phosphate)lysine).

The protein belongs to the SHMT family. As to quaternary structure, homodimer. It depends on pyridoxal 5'-phosphate as a cofactor.

It is found in the cytoplasm. The catalysed reaction is (6R)-5,10-methylene-5,6,7,8-tetrahydrofolate + glycine + H2O = (6S)-5,6,7,8-tetrahydrofolate + L-serine. It participates in one-carbon metabolism; tetrahydrofolate interconversion. The protein operates within amino-acid biosynthesis; glycine biosynthesis; glycine from L-serine: step 1/1. Functionally, catalyzes the reversible interconversion of serine and glycine with tetrahydrofolate (THF) serving as the one-carbon carrier. This reaction serves as the major source of one-carbon groups required for the biosynthesis of purines, thymidylate, methionine, and other important biomolecules. Also exhibits THF-independent aldolase activity toward beta-hydroxyamino acids, producing glycine and aldehydes, via a retro-aldol mechanism. This Chlamydia caviae (strain ATCC VR-813 / DSM 19441 / 03DC25 / GPIC) (Chlamydophila caviae) protein is Serine hydroxymethyltransferase.